The chain runs to 405 residues: Elongation factor Tu (405 aa).

A tr-type G domain is found at 10 to 215; that stretch reads KPHVNVGTIG…AIDAYIPTPE (206 aa). A G1 region spans residues 19 to 26; it reads GHVDHGKT. A GTP-binding site is contributed by 19-26; the sequence is GHVDHGKT. Thr26 serves as a coordination point for Mg(2+). The G2 stretch occupies residues 61–65; that stretch reads GITIN. Positions 82–85 are G3; the sequence is DCPG. GTP-binding positions include 82–86 and 137–140; these read DCPGH and NKVD. Residues 137-140 form a G4 region; sequence NKVD. The tract at residues 175 to 177 is G5; the sequence is SAL.

This sequence belongs to the TRAFAC class translation factor GTPase superfamily. Classic translation factor GTPase family. EF-Tu/EF-1A subfamily. In terms of assembly, monomer.

It is found in the cytoplasm. It carries out the reaction GTP + H2O = GDP + phosphate + H(+). In terms of biological role, GTP hydrolase that promotes the GTP-dependent binding of aminoacyl-tRNA to the A-site of ribosomes during protein biosynthesis. In Deinococcus geothermalis (strain DSM 11300 / CIP 105573 / AG-3a), this protein is Elongation factor Tu.